Here is a 490-residue protein sequence, read N- to C-terminus: Aspartyl/glutamyl-tRNA(Asn/Gln) amidotransferase subunit B (490 aa).

Belongs to the GatB/GatE family. GatB subfamily. In terms of assembly, heterotrimer of A, B and C subunits.

The enzyme catalyses L-glutamyl-tRNA(Gln) + L-glutamine + ATP + H2O = L-glutaminyl-tRNA(Gln) + L-glutamate + ADP + phosphate + H(+). It carries out the reaction L-aspartyl-tRNA(Asn) + L-glutamine + ATP + H2O = L-asparaginyl-tRNA(Asn) + L-glutamate + ADP + phosphate + 2 H(+). Functionally, allows the formation of correctly charged Asn-tRNA(Asn) or Gln-tRNA(Gln) through the transamidation of misacylated Asp-tRNA(Asn) or Glu-tRNA(Gln) in organisms which lack either or both of asparaginyl-tRNA or glutaminyl-tRNA synthetases. The reaction takes place in the presence of glutamine and ATP through an activated phospho-Asp-tRNA(Asn) or phospho-Glu-tRNA(Gln). The sequence is that of Aspartyl/glutamyl-tRNA(Asn/Gln) amidotransferase subunit B from Methylorubrum extorquens (strain CM4 / NCIMB 13688) (Methylobacterium extorquens).